A 213-amino-acid chain; its full sequence is Guanylate kinase (213 aa).

The 180-residue stretch at 10 to 189 (GLLLMVVAPS…AYADLAHIYH (180 aa)) folds into the Guanylate kinase-like domain. 17–24 (APSGVGKT) lines the ATP pocket.

Belongs to the guanylate kinase family.

It localises to the cytoplasm. It catalyses the reaction GMP + ATP = GDP + ADP. In terms of biological role, essential for recycling GMP and indirectly, cGMP. The chain is Guanylate kinase (gmk) from Caulobacter vibrioides (strain ATCC 19089 / CIP 103742 / CB 15) (Caulobacter crescentus).